The primary structure comprises 189 residues: Ribosome hibernation promotion factor (189 aa).

Belongs to the HPF/YfiA ribosome-associated protein family. Long HPF subfamily. Interacts with 100S ribosomes. Not associated with 70S ribosome monomers, about 1 monomer per ribosome.

It localises to the cytoplasm. Functionally, required for dimerization of active 70S ribosomes into 100S ribosomes in stationary phase; 100S ribosomes are translationally inactive and sometimes present during exponential growth. May not be the only factor implicated. Might negatively regulate the activity of the sigma-54 factor (SigL). In Bacillus subtilis (strain 168), this protein is Ribosome hibernation promotion factor (yvyD).